The primary structure comprises 684 residues: Poly(A) RNA polymerase cid14 (684 aa).

Disordered regions lie at residues Met1–Asp52, Asp64–Glu127, and Trp161–Glu219. Composition is skewed to basic and acidic residues over residues Glu19–Ser35, Gly73–Gly91, Asp108–Glu127, Ser171–Lys186, and Phe199–Asn210. 2 residues coordinate Mg(2+): Asp298 and Asp300. Positions 364, 389, 407, 408, 492, and 496 each coordinate ATP. Residues Asn434–Asn492 form the PAP-associated domain. The tract at residues Gly623 to Phe684 is disordered. The segment covering Gln628 to Ser655 has biased composition (polar residues). Residues Asp656–Asp672 show a composition bias toward acidic residues.

The protein belongs to the DNA polymerase type-B-like family. Heterooligomer. Component of the TRAMP complex composed of at least cid14, mtr4, and air1. It depends on Mg(2+) as a cofactor. Requires Mn(2+) as cofactor.

It is found in the nucleus. It localises to the nucleolus. The enzyme catalyses RNA(n) + ATP = RNA(n)-3'-adenine ribonucleotide + diphosphate. Required for 3' polyadenylation of the 5.8S and 25S rRNAs as a prelude to their degradation in the exosome. Involved in the nucleolar organization to ensure faithful chromosome segregation during mitosis. This Schizosaccharomyces pombe (strain 972 / ATCC 24843) (Fission yeast) protein is Poly(A) RNA polymerase cid14 (cid14).